Reading from the N-terminus, the 500-residue chain is Polyenoic fatty acid isomerase (500 aa).

Residues 1–21 form the signal peptide; that stretch reads MSLNRVLHIFLIAYLACTALT.

In terms of assembly, homodimer. It depends on an oxidized flavin as a cofactor. Post-translationally, glycosylated.

It catalyses the reaction (5Z,8Z,11Z,14Z,17Z)-eicosapentaenoate = (5Z,7E,9E,14Z,17Z)-icosapentaenoate. Its function is as follows. Involved in the biosynthesis of conjugated triene-containing fatty acids. Catalyzes the isomerization of a wide range of substrates containing three or more methylene interrupted olefins into a Z,E,E conjugated triene functionality. May be involved in a stress tolerance mechanism as response to intertidal habitats with direct sunlight, desiccation and high temperature. In vitro substrates include arachidonic acid ((5Z,8Z,11Z,14Z)-eicosatetraenoic acid), EPA ((5Z,8Z, 11Z,14Z,17Z)-eicosapentaenoic acid), DHA ((4Z,7Z,10Z,13Z,16Z,19Z)-docosahexenoic acid), adrenic acid ((7Z,10Z,13Z,16Z)-docosatetraenoic acid), anandamide (arachidonyl-N-ethanolamide) and eicosatrienoic acid ((5Z,8Z,11Z)-eicosatrienoic acid). Gamma-linolenic acid (18:3 6Z,9Z,12Z) and dihomo-gamma-linolenic acid (20:3 8Z,11Z,14Z) are transformed into mixtures of conjugated diene and triene fatty acids, linoleic acid is only transformed to a conjugated diene. In Ptilota filicina (Red alga), this protein is Polyenoic fatty acid isomerase.